Consider the following 274-residue polypeptide: Type II restriction enzyme HgiEI (274 aa).

This sequence belongs to the TdeIII type II restriction endonuclease family.

The enzyme catalyses Endonucleolytic cleavage of DNA to give specific double-stranded fragments with terminal 5'-phosphates.. In terms of biological role, a P subtype restriction enzyme that recognizes the double-stranded sequence 5'-GGWCC-3' and cleaves after G-1. This system is more active than isoschizomeric RM.HgiBI. In Herpetosiphon aurantiacus (Herpetosiphon giganteus), this protein is Type II restriction enzyme HgiEI.